The primary structure comprises 34 residues: Photosystem II reaction center protein T (34 aa).

The helical transmembrane segment at 3-23 threads the bilayer; the sequence is SVAYILIFTLTIGTLFFAVAF.

Belongs to the PsbT family. As to quaternary structure, PSII is composed of 1 copy each of membrane proteins PsbA, PsbB, PsbC, PsbD, PsbE, PsbF, PsbH, PsbI, PsbJ, PsbK, PsbL, PsbM, PsbT, PsbX, PsbY, PsbZ, Psb30/Ycf12, peripheral proteins PsbO, CyanoQ (PsbQ), PsbU, PsbV and a large number of cofactors. It forms dimeric complexes.

The protein localises to the cellular thylakoid membrane. Its function is as follows. Found at the monomer-monomer interface of the photosystem II (PS II) dimer, plays a role in assembly and dimerization of PSII. PSII is a light-driven water plastoquinone oxidoreductase, using light energy to abstract electrons from H(2)O, generating a proton gradient subsequently used for ATP formation. The sequence is that of Photosystem II reaction center protein T from Mastigocladus laminosus (Fischerella sp.).